Reading from the N-terminus, the 628-residue chain is MRPKEQVQSGAGDGTGSGDPAAGTPTTQPAVGPAPEPSAEPKPAPAQGTGSGQKSGSRTKTGSFCRSMIIGDSDAPWTRYVFQGPYGPRATGLGTGKAEGIWKTPAAYIGRRPGVSGPERAAFIRELQEALCPNPPPTKKITEDDVKVMLYLLEEKERDLNTAARIGQSLVKQNSVLMEENNKLETMLGSAREEILHLRKQVNLRDDLLQLYSDSDDDDDEEDEEDEEEGEEEEREGQRDQDQQHDHPYGAPKPHPKAETAHRCPQLETLQQKLRLLEEENDHLREEASHLDNLEDEEQMLILECVEQFSEASQQMAELSEVLVLRLEGYERQQKEITQLQAEITKLQQRCQSYGAQTEKLQQMLASEKGIHSESLRAGSYMQDYGSRPRDRQEDGKSHRQRSSMPAGSVTHYGYSVPLDALPSFPETLAEELRTSLRKFITDPAYFMERRDTHCREGRKKEQRAMPPPPAQDLKPPEDFEAPEELVPEEELGAIEEVGTAEDGQAEENEQASEETEAWEEVEPEVDETTRMNVVVSALEASGLGPSHLDMKYVLQQLSNWQDAHSKRQQKQKVVPKDSPTPQQQTNMGGGILEQQPRVPTQDSQRLEEDRATHSPSAREEEGPSGAT.

Disordered regions lie at residues 1–62 and 212–264; these read MRPK…TKTG and YSDS…AHRC. Residues 32 to 44 show a composition bias toward pro residues; the sequence is GPAPEPSAEPKPA. Over residues 52–62 the composition is skewed to polar residues; sequence GQKSGSRTKTG. The HAP1 N-terminal domain occupies 79 to 403; it reads RYVFQGPYGP…EDGKSHRQRS (325 aa). The segment at 152–319 is sufficient for interaction with KIF5B; that stretch reads LLEEKERDLN…SEASQQMAEL (168 aa). The segment at 157–261 is interaction with TBP; that stretch reads ERDLNTAARI…PKPHPKAETA (105 aa). 2 coiled-coil regions span residues 168–301 and 327–367; these read QSLV…EQML and LEGY…MLAS. Residues 214–235 show a composition bias toward acidic residues; sequence DSDDDDDEEDEEDEEEGEEEER. Basic and acidic residues predominate over residues 236 to 248; it reads EGQRDQDQQHDHP. The sufficient for self-association and interaction with HD stretch occupies residues 276 to 444; the sequence is LLEEENDHLR…TSLRKFITDP (169 aa). Disordered stretches follow at residues 372 to 411, 451 to 529, and 562 to 628; these read HSES…GSVT, RDTH…VDET, and QDAH…SGAT. Composition is skewed to basic and acidic residues over residues 387 to 398 and 451 to 464; these read SRPRDRQEDGKS and RDTH…KEQR. Residues 473-582 form an interaction with TBP region; it reads DLKPPEDFEA…KVVPKDSPTP (110 aa). Composition is skewed to acidic residues over residues 479 to 494 and 504 to 527; these read DFEA…ELGA and GQAE…PEVD. Arginine 598 bears the Phosphothreonine mark. A compositionally biased stretch (basic and acidic residues) spans 605–622; sequence QRLEEDRATHSPSAREEE.

Self-associates. Interacts with HTT/huntingtin; enhanced by an expanded polyglutamine repeat within HTT. Isoform A interacts with DCTN1; decreased in presence of HTT with expanded polyglutamine repeat; decreased by phosphorylation of Hap1 isoform A at Thr-598. Isoform A interacts with KLC2; decreased by phosphorylation of Hap1 isoform A at Thr-598. Isoform A interacts with ITPR1 and APP. Isoform A interacts with AR; decreased by an expanded polyglutamine repeat within AR. Isoform A interacts with YWHAZ; enhanced by phosphorylation of Hap1 isoform A at Thr-598. Isoform A interacts with BDNF and SORT1; probably forming a complex involved in proBDNF trafficking, degradation and processing. Interacts with TBP, AHI1, HGS and KALRN. Interacts with KIF5A, KIF5B, KIF5C and GABRB3; indicative for an HAP1:KIF5 complex transporting a GABA(A) receptor as cargo. Interacts with ATXN3; in STBs. Interacts with NTRK2; HAP1 stabilizes association of NTRK2 with SORT1 preventing NTRK2 degradation. Interacts with CFAP263. Post-translationally, isoform A is phosphorylated on Thr-598.

Its subcellular location is the cytoplasm. The protein resides in the presynapse. It localises to the cytoskeleton. The protein localises to the cell projection. It is found in the dendritic spine. Its subcellular location is the dendrite. The protein resides in the axon. It localises to the lysosome. The protein localises to the endoplasmic reticulum. It is found in the mitochondrion. Its subcellular location is the nucleus. The protein resides in the cytoplasmic vesicle. It localises to the autophagosome. The protein localises to the early endosome. It is found in the growth cone. Its subcellular location is the neuron projection. The protein resides in the secretory vesicle. It localises to the synaptic vesicle. Originally identified as neuronal protein that specifically associates with HTT/huntingtin and the binding is enhanced by an expanded polyglutamine repeat within HTT possibly affecting HAP1 interaction properties. Both HTT and HAP1 are involved in intracellular trafficking and HAP1 is proposed to link HTT to motor proteins and/or transport cargos. Seems to play a role in vesicular transport within neurons and axons such as from early endosomes to late endocytic compartments and to promote neurite outgrowth. The vesicular transport function via association with microtubule-dependent transporters can be attenuated by association with mutant HTT. Involved in the axonal transport of BDNF and its activity-dependent secretion; the function seems to involve HTT, DCTN1 and a complex with SORT1. Involved in APP trafficking and seems to facilitate APP anterograde transport and membrane insertion thereby possibly reducing processing into amyloid beta. Involved in delivery of gamma-aminobutyric acid (GABA(A)) receptors to synapses; the function is dependent on kinesin motor protein KIF5 and is disrupted by HTT with expanded polyglutamine repeat. Involved in regulation of autophagosome motility by promoting efficient retrograde axonal transport. Seems to be involved in regulation of membrane receptor recycling and degradation, and respective signal transduction, including GABA(A) receptors, tyrosine kinase receptors, EGFR, IP3 receptor and androgen receptor. Among others suggested to be involved in control of feeding behavior (involving hypothalamic GABA(A) receptors), cerebellar and brainstem development (involving AHI1 and NTRK1/TrkA), postnatal neurogenesis (involving hypothalamic NTRK2/TrkB regulating the number of Npyr1-expressing cells), and ITPR1/InsP3R1-mediated Ca(2+) release (involving HTT and possibly the effect of mutant HTT). Via association with DCTN1/dynactin p150-glued and HTT/huntingtin involved in cytoplasmic retention of REST in neurons. May be involved in ciliogenesiss; however, reports are conflicting: PubMed:21985783 reports that Hap1 is required for ciliogenesis in primary cortical neurons and proposes that HTT interacts with PCM1 through HAP1; PubMed:23532844 reports that mice with disrupted Hap1 display normal cilium formation and function. Involved in regulation of exocytosis. Isoform A but not isoform B seems to be involved in formation of cytoplasmic inclusion bodies (STBs). In case of anomalous expression of TBP, can sequester a subset of TBP into STBs; sequestration is enhanced by an expanded polyglutamine repeat within TBP. The polypeptide is Huntingtin-associated protein 1 (Hap1) (Mus musculus (Mouse)).